A 513-amino-acid polypeptide reads, in one-letter code: Ribonuclease Y (513 aa).

The helical transmembrane segment at 6–26 (YIIIAVVIIIICVILGLYVVD) threads the bilayer. The 86-residue stretch at 203–288 (TVHVVNLPND…EMVEKAKKEV (86 aa)) folds into the KH domain. Residues 329-422 (VLKHSIEVSH…VQAADAISAA (94 aa)) enclose the HD domain.

It belongs to the RNase Y family.

It localises to the cell membrane. Functionally, endoribonuclease that initiates mRNA decay. The chain is Ribonuclease Y from Clostridium botulinum (strain Loch Maree / Type A3).